A 352-amino-acid chain; its full sequence is Alanine racemase (352 aa).

Lys33 functions as the Proton acceptor; specific for D-alanine in the catalytic mechanism. Lys33 is modified (N6-(pyridoxal phosphate)lysine). Substrate is bound at residue Arg129. Residue Tyr250 is the Proton acceptor; specific for L-alanine of the active site. Met298 provides a ligand contact to substrate.

Belongs to the alanine racemase family. It depends on pyridoxal 5'-phosphate as a cofactor.

It carries out the reaction L-alanine = D-alanine. Its pathway is amino-acid biosynthesis; D-alanine biosynthesis; D-alanine from L-alanine: step 1/1. Catalyzes the interconversion of L-alanine and D-alanine. May also act on other amino acids. The polypeptide is Alanine racemase (alr) (Neisseria gonorrhoeae (strain ATCC 700825 / FA 1090)).